A 345-amino-acid polypeptide reads, in one-letter code: Growth hormone-inducible transmembrane protein (345 aa).

Residues 1 to 45 (MLAARLVCLRTLPSRVFHPAFTKASPVVKNSITKNQWLLTPSREY) constitute a mitochondrion transit peptide. Topologically, residues 46–82 (ATKTRIGIRRGRTGQELKEAALEPSMEKIFKIDQMGR) are mitochondrial matrix. A helical membrane pass occupies residues 83-103 (WFVAGGAAVGLGALCYYGLGL). Residues 104-125 (SNEIGAIEKAVIWPQYVKDRIH) are Mitochondrial intermembrane-facing. The chain crosses the membrane as a helical span at residues 126–146 (STYMYLAGSIGLTALSAIAIS). The Mitochondrial matrix portion of the chain corresponds to 147 to 159 (RTPVLMNFMMRGS). A helical transmembrane segment spans residues 160–180 (WVTIGVTFAAMVGAGMLVRSI). The Mitochondrial intermembrane segment spans residues 181 to 190 (PYDQSPGPKH). The chain crosses the membrane as a helical span at residues 191–211 (LAWLLHSGVMGAVVAPLTILG). Over 212-213 (GP) the chain is Mitochondrial matrix. The chain crosses the membrane as a helical span at residues 214–234 (LLIRAAWYTAGIVGGLSTVAM). Topologically, residues 235–244 (CAPSEKFLNM) are mitochondrial intermembrane. A helical membrane pass occupies residues 245–265 (GAPLGVGLGLVFVSSLGSMFL). Topologically, residues 266–271 (PPTTVA) are mitochondrial matrix. Residues 272-292 (GATLYSVAMYGGLVLFSMFLL) traverse the membrane as a helical segment. The Mitochondrial intermembrane portion of the chain corresponds to 293–345 (YDTQKVIKRAEVSPMYGVQKYDPINSMLSIYMDTLNIFMRVATMLATGGNRKK).

This sequence belongs to the BI1 family. As to quaternary structure, interacts with LETM1. Interacts with AFG3L2. Post-translationally, undergoes AFG3L2-mediated proteolytic degradation, upon hyperpolarization of mitochondria.

It is found in the mitochondrion inner membrane. The catalysed reaction is Ca(2+)(in) + 2 H(+)(out) = Ca(2+)(out) + 2 H(+)(in). It catalyses the reaction K(+)(in) + H(+)(out) = K(+)(out) + H(+)(in). Plays an important role in maintenance of mitochondrial morphology and in mediating either calcium or potassium/proton antiport. Mediates proton-dependent calcium efflux from mitochondrion. Also functions as an electroneutral mitochondrial proton/potassium exchanger. Required for the mitochondrial tubular network and cristae organization. Involved in apoptotic release of cytochrome c. Inhibits the proteolytic activity of AFG3L2, stimulating respiration and stabilizing respiratory enzymes in actively respiring mitochondria. However, when mitochondria become hyperpolarized, GHITM loses its inhibitory activity toward AFG3L2 and the now the active AFG3L2 turns first on GHITM and, if hyperpolarization persists, on other proteins of the mitochondria, leading to a broad remodeling of the mitochondrial proteome. The polypeptide is Growth hormone-inducible transmembrane protein (GHITM) (Homo sapiens (Human)).